The primary structure comprises 103 residues: Large ribosomal subunit protein bL21 (103 aa).

This sequence belongs to the bacterial ribosomal protein bL21 family. In terms of assembly, part of the 50S ribosomal subunit. Contacts protein L20.

This protein binds to 23S rRNA in the presence of protein L20. In Leptothrix cholodnii (strain ATCC 51168 / LMG 8142 / SP-6) (Leptothrix discophora (strain SP-6)), this protein is Large ribosomal subunit protein bL21.